We begin with the raw amino-acid sequence, 246 residues long: Triosephosphate isomerase (246 aa).

Substrate is bound at residue 9–11 (NWK). His95 serves as the catalytic Electrophile. The active-site Proton acceptor is Glu165. Substrate is bound by residues Gly171, Ser210, and 231–232 (GG).

This sequence belongs to the triosephosphate isomerase family. Homodimer.

It is found in the cytoplasm. The enzyme catalyses D-glyceraldehyde 3-phosphate = dihydroxyacetone phosphate. Its pathway is carbohydrate biosynthesis; gluconeogenesis. The protein operates within carbohydrate degradation; glycolysis; D-glyceraldehyde 3-phosphate from glycerone phosphate: step 1/1. Involved in the gluconeogenesis. Catalyzes stereospecifically the conversion of dihydroxyacetone phosphate (DHAP) to D-glyceraldehyde-3-phosphate (G3P). The protein is Triosephosphate isomerase of Thermodesulfovibrio yellowstonii (strain ATCC 51303 / DSM 11347 / YP87).